Here is a 174-residue protein sequence, read N- to C-terminus: 3-hydroxydecanoyl-[acyl-carrier-protein] dehydratase (174 aa).

Residue His-71 is part of the active site.

This sequence belongs to the thioester dehydratase family. FabA subfamily. Homodimer.

The protein localises to the cytoplasm. The catalysed reaction is a (3R)-hydroxyacyl-[ACP] = a (2E)-enoyl-[ACP] + H2O. It carries out the reaction (3R)-hydroxydecanoyl-[ACP] = (2E)-decenoyl-[ACP] + H2O. The enzyme catalyses (2E)-decenoyl-[ACP] = (3Z)-decenoyl-[ACP]. It participates in lipid metabolism; fatty acid biosynthesis. Functionally, necessary for the introduction of cis unsaturation into fatty acids. Catalyzes the dehydration of (3R)-3-hydroxydecanoyl-ACP to E-(2)-decenoyl-ACP and then its isomerization to Z-(3)-decenoyl-ACP. Can catalyze the dehydratase reaction for beta-hydroxyacyl-ACPs with saturated chain lengths up to 16:0, being most active on intermediate chain length. This chain is 3-hydroxydecanoyl-[acyl-carrier-protein] dehydratase, found in Nitrobacter winogradskyi (strain ATCC 25391 / DSM 10237 / CIP 104748 / NCIMB 11846 / Nb-255).